The following is a 575-amino-acid chain: Thrombomodulin (575 aa).

The signal sequence occupies residues 1 to 18; it reads MLGVLVLGALALAGLGFP. Topologically, residues 19–515 are extracellular; the sequence is APAEPQPGGS…TPPAVGLVHS (497 aa). Residues 31–169 form the C-type lectin domain; the sequence is VEHDCFALYP…VKADGFLCEF (139 aa). N-linked (GlcNAc...) asparagine glycans are attached at residues Asn-47, Asn-115, and Asn-116. Cystine bridges form between Cys-137–Cys-158, Cys-245–Cys-256, Cys-252–Cys-265, Cys-267–Cys-280, Cys-288–Cys-296, Cys-292–Cys-308, Cys-310–Cys-323, Cys-329–Cys-340, Cys-336–Cys-349, Cys-351–Cys-362, Cys-369–Cys-378, Cys-374–Cys-388, Cys-390–Cys-404, Cys-408–Cys-413, Cys-417–Cys-425, Cys-427–Cys-439, Cys-445–Cys-455, Cys-451–Cys-464, and Cys-466–Cys-480. 2 consecutive EGF-like domains span residues 241-281 and 284-324; these read GAWD…RSCT and ATQS…HRCE. The region spanning 325–363 is the EGF-like 3; calcium-binding domain; that stretch reads DVDDCILEPSPCPQRCVNTQGGFECHCYPNYDLVDGECV. Asn-342 carries the post-translational modification (3R)-3-hydroxyasparagine. 2 consecutive EGF-like domains span residues 365–405 and 404–440; these read PVDP…HRCQ and CQMF…FICT. N-linked (GlcNAc...) asparagine glycosylation is present at Asn-382. Asn-409 is a glycosylation site (N-linked (GlcNAc...) asparagine). The EGF-like 6; calcium-binding domain maps to 441–481; sequence DIDECENGGFCSGVCHNLPGTFECICGPDSALARHIGTDCD. Positions 481-515 are involved in alpha-L/beta-2 and alpha-M/beta-2 integrin binding; that stretch reads DSGKVDGGDSGSGEPPPSPTPGSTLTPPAVGLVHS. Residues 484 to 506 are disordered; it reads KVDGGDSGSGEPPPSPTPGSTLT. O-linked (Xyl...) (chondroitin sulfate) serine glycosylation is found at Ser-490 and Ser-492. A helical transmembrane segment spans residues 516-539; that stretch reads GLLIGISIASLCLVVALLALLCHL. Residues 540–575 lie on the Cytoplasmic side of the membrane; the sequence is RKKQGAARAKMEYKCAAPSKEVVLQHVRTERTPQRL.

Interacts with ITGAL, ITGAM and ITGB2. Interacts with thrombin/F2; this interaction switches the specificity of thrombin from a procoagulant to an anticoagulant and antifibrinolytic protease. Interacts with ANGP1 and ANGP2; these interactions significantly inhibit the generation of activated PC and TAFIa/CPB2 by the thrombin/thrombomodulin complex. Interacts with PF4; this interaction enhances generation of activated protein C. Interacts with HMGB1; this interaction inhibits HMGB1 inflammatory activity. In terms of processing, N-glycosylated. Post-translationally, the iron and 2-oxoglutarate dependent 3-hydroxylation of aspartate and asparagine is (R) stereospecific within EGF domains. As to expression, endothelial cells are unique in synthesizing thrombomodulin.

The protein localises to the membrane. Endothelial cell receptor that plays a critical role in regulating several physiological processes including hemostasis, coagulation, fibrinolysis, inflammation, and angiogenesis. Acts as a cofactor for thrombin activation of protein C/PROC on the surface of vascular endothelial cells leading to initiation of the activated protein C anticoagulant pathway. Also accelerates the activation of the plasma carboxypeptidase B2/CPB2, which catalyzes removal of C-terminal basic amino acids from its substrates including kinins or anaphylatoxins leading to fibrinolysis inhibition. Plays critical protective roles in changing the cleavage specificity of protease-activated receptor 1/PAR1, inhibiting endothelial cell permeability and inflammation. Suppresses inflammation distinctly from its anticoagulant cofactor activity by sequestering HMGB1 thereby preventing it from engaging cellular receptors such as RAGE and contributing to the inflammatory response. The chain is Thrombomodulin (THBD) from Homo sapiens (Human).